The sequence spans 442 residues: Exodeoxyribonuclease 7 large subunit (442 aa).

Belongs to the XseA family. In terms of assembly, heterooligomer composed of large and small subunits.

It is found in the cytoplasm. The enzyme catalyses Exonucleolytic cleavage in either 5'- to 3'- or 3'- to 5'-direction to yield nucleoside 5'-phosphates.. Its function is as follows. Bidirectionally degrades single-stranded DNA into large acid-insoluble oligonucleotides, which are then degraded further into small acid-soluble oligonucleotides. This chain is Exodeoxyribonuclease 7 large subunit, found in Rickettsia bellii (strain OSU 85-389).